A 98-amino-acid polypeptide reads, in one-letter code: Alpha-elicitin hibernalin (98 aa).

3 disulfides stabilise this stretch: Cys-3–Cys-71, Cys-27–Cys-56, and Cys-51–Cys-95.

Its subcellular location is the secreted. Its function is as follows. Induces local and distal defense responses (incompatible hypersensitive reaction) in plants from the solanaceae and cruciferae families. Elicits leaf necrosis and causes the accumulation of pathogenesis-related proteins. Might interact with the lipidic molecules of the plasma membrane. In Phytophthora hibernalis, this protein is Alpha-elicitin hibernalin.